The sequence spans 74 residues: Alpha-elapitoxin-Aa2d (74 aa).

5 disulfides stabilise this stretch: Cys-3–Cys-21, Cys-14–Cys-42, Cys-27–Cys-31, Cys-46–Cys-57, and Cys-58–Cys-63.

This sequence belongs to the three-finger toxin family. Long-chain subfamily. Type II alpha-neurotoxin sub-subfamily. Expressed by the venom gland.

Its subcellular location is the secreted. Binds with high affinity to muscular (alpha-1/CHRNA1) and neuronal (alpha-7/CHRNA7) nicotinic acetylcholine receptor (nAChR) and inhibits acetylcholine from binding to the receptor, thereby impairing neuromuscular and neuronal transmission. This Acanthophis antarcticus (Common death adder) protein is Alpha-elapitoxin-Aa2d.